Consider the following 314-residue polypeptide: Lipoyl synthase (314 aa).

Cys-61, Cys-66, Cys-72, Cys-87, Cys-91, Cys-94, and Ser-301 together coordinate [4Fe-4S] cluster. The region spanning 73–290 is the Radical SAM core domain; it reads FGRGTATFMI…EEEAKKMGFS (218 aa).

Belongs to the radical SAM superfamily. Lipoyl synthase family. [4Fe-4S] cluster serves as cofactor.

Its subcellular location is the cytoplasm. It catalyses the reaction [[Fe-S] cluster scaffold protein carrying a second [4Fe-4S](2+) cluster] + N(6)-octanoyl-L-lysyl-[protein] + 2 oxidized [2Fe-2S]-[ferredoxin] + 2 S-adenosyl-L-methionine + 4 H(+) = [[Fe-S] cluster scaffold protein] + N(6)-[(R)-dihydrolipoyl]-L-lysyl-[protein] + 4 Fe(3+) + 2 hydrogen sulfide + 2 5'-deoxyadenosine + 2 L-methionine + 2 reduced [2Fe-2S]-[ferredoxin]. It functions in the pathway protein modification; protein lipoylation via endogenous pathway; protein N(6)-(lipoyl)lysine from octanoyl-[acyl-carrier-protein]: step 2/2. In terms of biological role, catalyzes the radical-mediated insertion of two sulfur atoms into the C-6 and C-8 positions of the octanoyl moiety bound to the lipoyl domains of lipoate-dependent enzymes, thereby converting the octanoylated domains into lipoylated derivatives. The chain is Lipoyl synthase from Dechloromonas aromatica (strain RCB).